We begin with the raw amino-acid sequence, 474 residues long: Synaptotagmin-17 (474 aa).

The segment at 60–112 (WLMASRSSDKDGDSVHTASEVPLTPRTNSPDGRRSSSDTSKSTYSLTRRISSL) is disordered. A compositionally biased stretch (low complexity) spans 96-112 (SDTSKSTYSLTRRISSL). Phosphoserine occurs at positions 118 and 119. 2 C2 domains span residues 184–310 (QLGM…HWWK) and 321–455 (ELGE…EQWH).

This sequence belongs to the synaptotagmin family. As to expression, expressed abundantly in brain (frontal and temporal lobes, hippocampus, hypothalamus, amygdala, substantia nigra, and pituitary), kidney, and prostate. Expressed in fetal brain, kidney and lung. Expressed in melanocytes.

The protein resides in the membrane. In terms of biological role, plays a role in dendrite formation by melanocytes. This chain is Synaptotagmin-17 (SYT17), found in Homo sapiens (Human).